The chain runs to 113 residues: Prefoldin subunit beta (113 aa).

It belongs to the prefoldin subunit beta family. In terms of assembly, heterohexamer of two alpha and four beta subunits.

The protein resides in the cytoplasm. Molecular chaperone capable of stabilizing a range of proteins. Seems to fulfill an ATP-independent, HSP70-like function in archaeal de novo protein folding. In Methanococcus maripaludis (strain C7 / ATCC BAA-1331), this protein is Prefoldin subunit beta.